Consider the following 396-residue polypeptide: S-arrestin (396 aa).

Belongs to the arrestin family.

Arrestin is one of the major proteins of the ros (retinal rod outer segments); it binds to photoactivated-phosphorylated rhodopsin, thereby apparently preventing the transducin-mediated activation of phosphodiesterase. This chain is S-arrestin, found in Aquarana catesbeiana (American bullfrog).